Reading from the N-terminus, the 254-residue chain is MLHQFSRNELAIGKEGLETLKNSTVAVLGVGGVGSFAAEALARSGVGRILLVDKDDVDITNVNRQLHALLSTVGQPKVDLMKARIADINPECEVIALKMFYTEETYEQFFDYGLDYVIDASDTICYKIHLMKECLKRDIPLISSMGAANKTDPTRFQIADISKTHTDPIAKVVRTKLRKEGIKKGVQVIFSDESPIVIREDVRKEVGNDEAKIRKAKMPPSSNAFVPSVAGLIMGGHVVMDLLKDIEIKRVKDK.

Belongs to the HesA/MoeB/ThiF family.

Its function is as follows. Catalyzes the ATP-dependent dehydration of threonylcarbamoyladenosine at position 37 (t(6)A37) to form cyclic t(6)A37 (ct(6)A37) in tRNAs that read codons beginning with adenine. The sequence is that of tRNA threonylcarbamoyladenosine dehydratase (tcdA) from Bacillus subtilis (strain 168).